A 731-amino-acid chain; its full sequence is Gelsolin (731 aa).

The tract at residues 2–125 is actin-severing; it reads VVEHPEFLKA…YKKGGVASGF (124 aa). The Gelsolin-like 1 repeat unit spans residues 25–107; the sequence is FDLVPVPPNL…VQGFESATFL (83 aa). The residue at position 35 (Tyr-35) is a Phosphotyrosine. Ca(2+) contacts are provided by Gly-41, Asp-42, Glu-73, Asp-85, Gly-90, and Ala-92. Residues 72 to 75 are actin-actin interfilament contact point; the sequence is DESG. A 1,2-diacyl-sn-glycero-3-phospho-(1D-myo-inositol-4,5-bisphosphate) is bound at residue 111–118; that stretch reads KSGLKYKK. Val-121 contacts Ca(2+). Position 137 to 145 (137 to 145) interacts with a 1,2-diacyl-sn-glycero-3-phospho-(1D-myo-inositol-4,5-bisphosphate); sequence RLFQVKGRR. A Gelsolin-like 2 repeat occupies 147 to 219; that stretch reads VRATEVPVSW…SEEGAEPEAM (73 aa). Ca(2+) is bound by residues Gly-162 and Asp-163. Cys-164 and Cys-177 are disulfide-bonded. Glu-185 is a binding site for Ca(2+). Residues 197-211 show a composition bias toward basic and acidic residues; that stretch reads RDNERSGRARVHVSE. The interval 197-216 is disordered; sequence RDNERSGRARVHVSEEGAEP. The Ca(2+) site is built by Asp-235, Glu-278, Asp-279, and Glu-303. One copy of the Gelsolin-like 3 repeat lies at 266-338; sequence DENPFAQGAL…LPEGGETPLF (73 aa). Tyr-358 and Tyr-414 each carry phosphotyrosine. The interval 383–731 is actin-binding, Ca-sensitive; it reads AAQHGMDDDG…LDRALAELAA (349 aa). The Gelsolin-like 4 repeat unit spans residues 404-485; the sequence is SDKVPVDPAT…VQGKEPAHLM (82 aa). Ca(2+)-binding residues include Gly-420, Asp-421, Glu-451, Asp-463, Gly-468, Pro-470, and Thr-500. The stretch at 527–591 is one Gelsolin-like 5 repeat; sequence AVEVMPKAGA…AEGSEPDSFW (65 aa). Lys-533 carries the post-translational modification N6-acetyllysine. Ca(2+) contacts are provided by Asn-540 and Asp-541. Tyr-552 is modified (phosphotyrosine). Glu-563 contacts Ca(2+). The residue at position 600 (Tyr-600) is a Phosphotyrosine. Residues 630 to 705 form a Gelsolin-like 6 repeat; sequence IEEVPGELMQ…VKQGFEPPSF (76 aa). Residues Asp-645, Asp-646, and Glu-668 each coordinate Ca(2+). A Phosphothreonine modification is found at Thr-691.

Belongs to the villin/gelsolin family. In terms of assembly, binds to actin and to fibronectin. Identified in a complex composed of ACTA1, COBL, GSN and TMSB4X. Interacts with the inactive form of EIF2AK2/PKR. Interacts with FLII.

It is found in the cytoplasm. The protein resides in the cytoskeleton. Calcium-regulated, actin-modulating protein that binds to the plus (or barbed) ends of actin monomers or filaments, preventing monomer exchange (end-blocking or capping). It can promote the assembly of monomers into filaments (nucleation) as well as sever filaments already formed. Plays a role in ciliogenesis. This chain is Gelsolin (GSN), found in Bos taurus (Bovine).